The sequence spans 430 residues: Protein arginine methyltransferase NDUFAF7, mitochondrial (430 aa).

The N-terminal 31 residues, 1-31 (MSGLARLRKTAFLMVSASANCRIQRYQSSRT), are a transit peptide targeting the mitochondrion.

It belongs to the NDUFAF7 family.

The protein resides in the mitochondrion. It catalyses the reaction L-arginyl-[protein] + 2 S-adenosyl-L-methionine = N(omega),N(omega)'-dimethyl-L-arginyl-[protein] + 2 S-adenosyl-L-homocysteine + 2 H(+). Its function is as follows. Arginine methyltransferase involved in the assembly or stability of mitochondrial NADH:ubiquinone oxidoreductase complex (complex I). Acts by mediating symmetric dimethylation of 'Arg-118' of ndufs2 after it assembles into the complex I, stabilizing the early intermediate complex. The sequence is that of Protein arginine methyltransferase NDUFAF7, mitochondrial from Xenopus tropicalis (Western clawed frog).